We begin with the raw amino-acid sequence, 1158 residues long: Adipocyte enhancer-binding protein 1 (1158 aa).

The N-terminal stretch at 1 to 25 is a signal peptide; that stretch reads MAAVRGAPLLSCLLALLALCPGGRP. A disordered region spans residues 41–387; it reads FLSELEPEPR…TPTEKVKCPP (347 aa). The span at 45-55 shows a compositional bias: acidic residues; sequence LEPEPREDDVE. Residues 100 to 110 are compositionally biased toward basic and acidic residues; that stretch reads DKGPKVPKESL. The segment covering 116-166 has biased composition (basic residues); sequence PPKKGKEKPPKATKKPKEKPPKATKKPKEKPPKATKKPKEKPPKATKKPPS. A compositionally biased stretch (pro residues) spans 182-192; it reads PLPPPPSPGPE. Residues 193–202 are compositionally biased toward low complexity; sequence ELPQEGGAPL. The span at 211 to 223 shows a compositional bias: basic and acidic residues; it reads EETHVEAREHQPE. Positions 252-266 are enriched in basic residues; that stretch reads RQKQPRPPPSRRRRP. Positions 267–289 are enriched in basic and acidic residues; sequence ERVWPEPPEEKAPAPAPEERIEP. The segment covering 290–300 has biased composition (pro residues); that stretch reads PVKPLLPPLPP. The segment covering 326–371 has biased composition (basic and acidic residues); sequence PDAERQTDEEKEELKKPKKEDSSPKEETDKWAVEKGKDHKEPRKGE. In terms of domain architecture, F5/8 type C spans 383-540; the sequence is VKCPPIGMES…LCMRLEVLGC (158 aa). The tract at residues 390-555 is required for DNA-binding and interaction with NFKBIA; the sequence is MESHRIEDNQ…YSYYAQNEVV (166 aa). The interaction with MAPK1 and MAPK3 stretch occupies residues 421 to 624; that stretch reads TGATEDDYYD…EPEFRYTAGI (204 aa). N-linked (GlcNAc...) asparagine glycosylation is present at N528. The tract at residues 555-985 is interaction with PTEN; sequence VATDDLDFRH…TQCNFILARS (431 aa). Residues 563–904 form the Peptidase M14 domain; the sequence is RHHSYKDMRQ…EALLTFMEQV (342 aa). A glycan (N-linked (GlcNAc...) asparagine) is linked at N922. A required for transcriptional repression region spans residues 941 to 1158; sequence DYWRILNPGE…ETYTVNFGDF (218 aa). Residues 1006–1158 are interaction with MAPK1 and MAPK3; that stretch reads DPSRPMTPQQ…ETYTVNFGDF (153 aa). Residues 1108-1137 show a composition bias toward acidic residues; the sequence is EFETQLEPEFETQLEPEFEEEEEEEKEEEI. Positions 1108–1141 are disordered; sequence EFETQLEPEFETQLEPEFEEEEEEEKEEEIATGQ.

Belongs to the peptidase M14 family. In terms of assembly, isoform 1: Interacts with different types of collagen, including collagens I, III, and V. Isoform 2: Interacts with GNG5, NFKBIA, MAPK1, MAPK3 and PTEN. Interaction with MAPK1 may stimulate DNA-binding. May interact with calmodulin. Binds to DNA in vitro. Post-translationally, phosphorylated by MAPK1 in vitro. In terms of tissue distribution, expressed in osteoblast and visceral fat.

Its subcellular location is the secreted. It is found in the cytoplasm. The protein localises to the nucleus. Functionally, as a positive regulator of collagen fibrillogenesis, it is probably involved in the organization and remodeling of the extracellular matrix. Its function is as follows. May positively regulate MAP-kinase activity in adipocytes, leading to enhanced adipocyte proliferation and reduced adipocyte differentiation. May also positively regulate NF-kappa-B activity in macrophages by promoting the phosphorylation and subsequent degradation of I-kappa-B-alpha (NFKBIA), leading to enhanced macrophage inflammatory responsiveness. Can act as a transcriptional repressor. The chain is Adipocyte enhancer-binding protein 1 (AEBP1) from Homo sapiens (Human).